An 80-amino-acid polypeptide reads, in one-letter code: Exodeoxyribonuclease 7 small subunit (80 aa).

This sequence belongs to the XseB family. As to quaternary structure, heterooligomer composed of large and small subunits.

It is found in the cytoplasm. It catalyses the reaction Exonucleolytic cleavage in either 5'- to 3'- or 3'- to 5'-direction to yield nucleoside 5'-phosphates.. Functionally, bidirectionally degrades single-stranded DNA into large acid-insoluble oligonucleotides, which are then degraded further into small acid-soluble oligonucleotides. This Salmonella paratyphi B (strain ATCC BAA-1250 / SPB7) protein is Exodeoxyribonuclease 7 small subunit.